The primary structure comprises 288 residues: MESIRLKARAKINLGLDVIGRRENGYHDVRMVMQTVGLYDRIIMTRIPEEEIRIKTNIGFLPVNENNLVYKAIMLMKNKYKLDGGIEVDLNKFIPVAAGMAGGSSDAACALFGMNRLFELNVPMRELMKLGVEIGADVPYCLMRGTALAEGIGEKLTRLPDMPFCHILIAKPPVNVSTKLVYEKLDNTDVKLHPDIDGIIEAIKLKDVALVASRMGNVLESVTIPLYPVIDSIKKDMIEHGAINAMMSGSGPTVFGIFPDEQSMIACQQFLRQKGEARQVYTTETFTP.

The active site involves Lys11. 95–105 (PVAAGMAGGSS) is an ATP binding site. Asp137 is an active-site residue.

The protein belongs to the GHMP kinase family. IspE subfamily.

It catalyses the reaction 4-CDP-2-C-methyl-D-erythritol + ATP = 4-CDP-2-C-methyl-D-erythritol 2-phosphate + ADP + H(+). Its pathway is isoprenoid biosynthesis; isopentenyl diphosphate biosynthesis via DXP pathway; isopentenyl diphosphate from 1-deoxy-D-xylulose 5-phosphate: step 3/6. Its function is as follows. Catalyzes the phosphorylation of the position 2 hydroxy group of 4-diphosphocytidyl-2C-methyl-D-erythritol. This Lachnospira eligens (strain ATCC 27750 / DSM 3376 / VPI C15-48 / C15-B4) (Eubacterium eligens) protein is 4-diphosphocytidyl-2-C-methyl-D-erythritol kinase.